The primary structure comprises 153 residues: Interleukin-4 (153 aa).

The first 24 residues, 1-24, serve as a signal peptide directing secretion; sequence MGLTSQLLPPLFFLLACAGNFVHG. 3 cysteine pairs are disulfide-bonded: Cys27–Cys151, Cys48–Cys89, and Cys70–Cys123. N-linked (GlcNAc...) asparagine glycosylation occurs at Asn62.

This sequence belongs to the IL-4/IL-13 family. In terms of assembly, interacts with IL4R. Interacts with IL13RA1.

Its subcellular location is the secreted. Its function is as follows. Cytokine secreted primarily by mast cells, T-cells, eosinophils, and basophils that plays a role in regulating antibody production, hematopoiesis and inflammation, and the development of effector T-cell responses. Induces the expression of class II MHC molecules on resting B-cells. Enhances both secretion and cell surface expression of IgE and IgG1. Also regulates the expression of the low affinity Fc receptor for IgE (CD23) on both lymphocytes and monocytes. Positively regulates IL31RA expression in macrophages. Stimulates autophagy in dendritic cells by interfering with mTORC1 signaling and through the induction of RUFY4. In addition, plays a critical role in higher functions of the normal brain, such as memory and learning. Upon binding to IL4, IL4R receptor dimerizes either with the common IL2R gamma chain/IL2RG to produce the type 1 signaling complex, located mainly on hematopoietic cells, or with the IL13RA1 to produce the type 2 complex, which is also expressed on nonhematopoietic cells. Engagement of both types of receptors initiates JAK3 and to a lower extend JAK1 phosphorylation leading to activation of the signal transducer and activator of transcription 6/STAT6. The polypeptide is Interleukin-4 (IL4) (Homo sapiens (Human)).